Reading from the N-terminus, the 308-residue chain is tRNA dimethylallyltransferase (308 aa).

Position 10–17 (10–17) interacts with ATP; the sequence is GPTASGKT. 12–17 lines the substrate pocket; sequence TASGKT. 2 interaction with substrate tRNA regions span residues 35-38 and 159-163; these read DSSL and QRIFR.

The protein belongs to the IPP transferase family. As to quaternary structure, monomer. Mg(2+) serves as cofactor.

It catalyses the reaction adenosine(37) in tRNA + dimethylallyl diphosphate = N(6)-dimethylallyladenosine(37) in tRNA + diphosphate. Functionally, catalyzes the transfer of a dimethylallyl group onto the adenine at position 37 in tRNAs that read codons beginning with uridine, leading to the formation of N6-(dimethylallyl)adenosine (i(6)A). The protein is tRNA dimethylallyltransferase of Francisella philomiragia subsp. philomiragia (strain ATCC 25017 / CCUG 19701 / FSC 153 / O#319-036).